Here is a 419-residue protein sequence, read N- to C-terminus: Serine--tRNA ligase (419 aa).

An L-serine-binding site is contributed by 226 to 228 (TSE). ATP-binding positions include 257 to 259 (RRE) and V273. E280 serves as a coordination point for L-serine. 344–347 (ELTS) contacts ATP. An L-serine-binding site is contributed by T379.

Belongs to the class-II aminoacyl-tRNA synthetase family. Type-1 seryl-tRNA synthetase subfamily. In terms of assembly, homodimer. The tRNA molecule binds across the dimer.

The protein resides in the cytoplasm. It carries out the reaction tRNA(Ser) + L-serine + ATP = L-seryl-tRNA(Ser) + AMP + diphosphate + H(+). The enzyme catalyses tRNA(Sec) + L-serine + ATP = L-seryl-tRNA(Sec) + AMP + diphosphate + H(+). Its pathway is aminoacyl-tRNA biosynthesis; selenocysteinyl-tRNA(Sec) biosynthesis; L-seryl-tRNA(Sec) from L-serine and tRNA(Sec): step 1/1. Functionally, catalyzes the attachment of serine to tRNA(Ser). Is also able to aminoacylate tRNA(Sec) with serine, to form the misacylated tRNA L-seryl-tRNA(Sec), which will be further converted into selenocysteinyl-tRNA(Sec). The sequence is that of Serine--tRNA ligase from Mycobacterium marinum (strain ATCC BAA-535 / M).